We begin with the raw amino-acid sequence, 1171 residues long: ATP-dependent helicase/deoxyribonuclease subunit B (1171 aa).

Positions 1 to 390 constitute a UvrD-like helicase ATP-binding domain; sequence MSLRFVIGRA…HPLVECIRSA (390 aa). Residue 8–15 coordinates ATP; that stretch reads GRAGSGKS. Residues 281–587 form the UvrD-like helicase C-terminal domain; the sequence is MEQPRFHSPA…QFANIPPSLD (307 aa). [4Fe-4S] cluster contacts are provided by cysteine 805, cysteine 1129, cysteine 1132, and cysteine 1138.

This sequence belongs to the helicase family. AddB/RexB type 1 subfamily. As to quaternary structure, heterodimer of AddA and AddB. Mg(2+) is required as a cofactor. [4Fe-4S] cluster serves as cofactor.

Its function is as follows. The heterodimer acts as both an ATP-dependent DNA helicase and an ATP-dependent, dual-direction single-stranded exonuclease. Recognizes the chi site generating a DNA molecule suitable for the initiation of homologous recombination. The AddB subunit has 5' -&gt; 3' nuclease activity but not helicase activity. This chain is ATP-dependent helicase/deoxyribonuclease subunit B, found in Bacillus cereus (strain ATCC 10987 / NRS 248).